Reading from the N-terminus, the 825-residue chain is Phenylalanine--tRNA ligase beta subunit (825 aa).

Residues 39–154 (RTWADGVVLG…EAHPLGSDVR (116 aa)) form the tRNA-binding domain. The B5 domain maps to 411–506 (PLERTLKLRL…RLYGYDRFSE (96 aa)). Mg(2+) is bound by residues aspartate 484, aspartate 490, glutamate 493, and glutamate 494. The FDX-ACB domain maps to 731-824 (SPFPAADRDI…LATQFPVTLR (94 aa)).

Belongs to the phenylalanyl-tRNA synthetase beta subunit family. Type 1 subfamily. Tetramer of two alpha and two beta subunits. Mg(2+) serves as cofactor.

The protein resides in the cytoplasm. The catalysed reaction is tRNA(Phe) + L-phenylalanine + ATP = L-phenylalanyl-tRNA(Phe) + AMP + diphosphate + H(+). This Synechococcus sp. (strain JA-2-3B'a(2-13)) (Cyanobacteria bacterium Yellowstone B-Prime) protein is Phenylalanine--tRNA ligase beta subunit.